A 309-amino-acid polypeptide reads, in one-letter code: D-alanine--D-alanine ligase (309 aa).

Residues 104-301 (KQIWQGSDLP…FDALCVEILA (198 aa)) form the ATP-grasp domain. Residue 130–185 (VASLGLPVIIKPVHEGSSIGMSKVEKIEDFAPAIEKATAHDAIVMAEKWITGREYT) participates in ATP binding. Positions 255, 268, and 270 each coordinate Mg(2+).

The protein belongs to the D-alanine--D-alanine ligase family. It depends on Mg(2+) as a cofactor. Mn(2+) is required as a cofactor.

It is found in the cytoplasm. It carries out the reaction 2 D-alanine + ATP = D-alanyl-D-alanine + ADP + phosphate + H(+). The protein operates within cell wall biogenesis; peptidoglycan biosynthesis. Its function is as follows. Cell wall formation. The sequence is that of D-alanine--D-alanine ligase from Acinetobacter baylyi (strain ATCC 33305 / BD413 / ADP1).